Consider the following 150-residue polypeptide: Phosphoribosyl-AMP cyclohydrolase (150 aa).

Asp-92 provides a ligand contact to Mg(2+). Cys-93 contacts Zn(2+). 2 residues coordinate Mg(2+): Asp-94 and Asp-96. Zn(2+) is bound by residues Cys-111 and Cys-118.

This sequence belongs to the PRA-CH family. As to quaternary structure, homodimer. It depends on Mg(2+) as a cofactor. Zn(2+) serves as cofactor.

Its subcellular location is the cytoplasm. The catalysed reaction is 1-(5-phospho-beta-D-ribosyl)-5'-AMP + H2O = 1-(5-phospho-beta-D-ribosyl)-5-[(5-phospho-beta-D-ribosylamino)methylideneamino]imidazole-4-carboxamide. It participates in amino-acid biosynthesis; L-histidine biosynthesis; L-histidine from 5-phospho-alpha-D-ribose 1-diphosphate: step 3/9. Functionally, catalyzes the hydrolysis of the adenine ring of phosphoribosyl-AMP. This is Phosphoribosyl-AMP cyclohydrolase from Agrobacterium fabrum (strain C58 / ATCC 33970) (Agrobacterium tumefaciens (strain C58)).